We begin with the raw amino-acid sequence, 982 residues long: NACHT, LRR and PYD domains-containing protein 4C (982 aa).

The region spanning 1–93 (MASFFSDFGL…MERAGREIAG (93 aa)) is the Pyrin domain. One can recognise an NACHT domain in the interval 148–471 (HMVFLQGAAG…FYLLKSHMDH (324 aa)). 154 to 161 (GAAGIGKS) is a binding site for ATP. LRR repeat units follow at residues 594-617 (CSTLKKLSLSTQNVLSEGQEHSYT), 689-716 (NQCLQHLDLNLTFLSHGDVKLLCDVLSQ), 746-773 (SKMLKHLNLSSNNLDKGISSLSKALCHP), 802-825 (NKTLNHLDISSNDLKDEGLKVLCG), 827-844 (LSLPDSVLKSLSVRYCLI), 859-882 (NQNLRNLQVSNNKIEDAGVKLLCD), and 916-940 (CKTLWGINLQENALDHSGLIVLFEA).

This sequence belongs to the NLRP family.

Its function is as follows. May be involved in inflammation and recognition of cytosolic pathogen-associated molecular patterns (PAMPs) not intercepted by membrane-bound receptors. The protein is NACHT, LRR and PYD domains-containing protein 4C (Nlrp4c) of Mus musculus (Mouse).